Consider the following 305-residue polypeptide: NAD-dependent protein deacylase SIR4 (305 aa).

The transit peptide at 1–10 (MSAQVMHNRV) directs the protein to the mitochondrion. Residues 11 to 305 (MGTVKDSASK…VLEELASTIR (295 aa)) enclose the Deacetylase sirtuin-type domain. Residues 37–57 (GAGV…GIYS) and 118–121 (QNVD) contribute to the NAD(+) site. H139 serves as the catalytic Proton acceptor. Zn(2+) contacts are provided by C147, C150, C209, and C212. NAD(+) contacts are provided by residues 249–251 (GSS), 275–277 (NLG), and S293.

It belongs to the sirtuin family. Class II subfamily. Requires Zn(2+) as cofactor.

Its subcellular location is the mitochondrion matrix. It catalyses the reaction N(6)-acetyl-L-lysyl-[protein] + NAD(+) + H2O = 2''-O-acetyl-ADP-D-ribose + nicotinamide + L-lysyl-[protein]. Functionally, NAD-dependent protein deacylase. Catalyzes the NAD-dependent hydrolysis of acyl groups from lysine residues. The chain is NAD-dependent protein deacylase SIR4 from Batrachochytrium dendrobatidis (strain JAM81 / FGSC 10211) (Frog chytrid fungus).